We begin with the raw amino-acid sequence, 274 residues long: Putative outer membrane protein CPn_1073/CP_0776/CPj1073/CpB1118 (274 aa).

The N-terminal stretch at 1-21 is a signal peptide; the sequence is MRRYLFMVLALCLYRAAPLEA.

The protein localises to the cell outer membrane. The protein is Putative outer membrane protein CPn_1073/CP_0776/CPj1073/CpB1118 of Chlamydia pneumoniae (Chlamydophila pneumoniae).